Here is a 399-residue protein sequence, read N- to C-terminus: Acetate kinase (399 aa).

A Mg(2+)-binding site is contributed by Asn8. Residue Lys15 participates in ATP binding. Position 89 (Arg89) interacts with substrate. Asp146 acts as the Proton donor/acceptor in catalysis. Residues 206-210 (HVGNG), 283-285 (DMR), and 331-335 (GMGEN) each bind ATP. Residue Glu383 participates in Mg(2+) binding.

The protein belongs to the acetokinase family. As to quaternary structure, homodimer. Requires Mg(2+) as cofactor. Mn(2+) serves as cofactor.

The protein resides in the cytoplasm. It carries out the reaction acetate + ATP = acetyl phosphate + ADP. It functions in the pathway metabolic intermediate biosynthesis; acetyl-CoA biosynthesis; acetyl-CoA from acetate: step 1/2. Functionally, catalyzes the formation of acetyl phosphate from acetate and ATP. Can also catalyze the reverse reaction. This is Acetate kinase from Streptococcus equi subsp. equi (strain 4047).